We begin with the raw amino-acid sequence, 504 residues long: Glycerol kinase (504 aa).

An ADP-binding site is contributed by threonine 12. The ATP site is built by threonine 12, threonine 13, and serine 14. Threonine 12 contributes to the sn-glycerol 3-phosphate binding site. Arginine 16 is a binding site for ADP. Sn-glycerol 3-phosphate is bound by residues arginine 82, glutamate 83, tyrosine 134, and aspartate 244. Residues arginine 82, glutamate 83, tyrosine 134, aspartate 244, and glutamine 245 each contribute to the glycerol site. ADP is bound by residues threonine 266 and glycine 309. Threonine 266, glycine 309, glutamine 313, and glycine 410 together coordinate ATP. ADP-binding residues include glycine 410 and asparagine 414.

This sequence belongs to the FGGY kinase family. In terms of assembly, homotetramer and homodimer (in equilibrium).

It catalyses the reaction glycerol + ATP = sn-glycerol 3-phosphate + ADP + H(+). Its pathway is polyol metabolism; glycerol degradation via glycerol kinase pathway; sn-glycerol 3-phosphate from glycerol: step 1/1. Its activity is regulated as follows. Activated by phosphorylation and inhibited by fructose 1,6-bisphosphate (FBP). Key enzyme in the regulation of glycerol uptake and metabolism. Catalyzes the phosphorylation of glycerol to yield sn-glycerol 3-phosphate. This Alkaliphilus oremlandii (strain OhILAs) (Clostridium oremlandii (strain OhILAs)) protein is Glycerol kinase.